Reading from the N-terminus, the 682-residue chain is Probable methyltransferase PMT12 (682 aa).

The Cytoplasmic portion of the chain corresponds to 1–11 (MKLFLNSNLLR). A helical; Signal-anchor for type II membrane protein transmembrane segment spans residues 12-32 (NSIFFKISAFVLISVACFFLG). Topologically, residues 33-682 (KHWSEDGFRR…KRRKTKGKRA (650 aa)) are lumenal. Residues Asn-67, Asn-103, Asn-125, Asn-155, Asn-173, Asn-193, Asn-273, Asn-350, Asn-395, Asn-419, Asn-600, and Asn-625 are each glycosylated (N-linked (GlcNAc...) asparagine).

The protein belongs to the methyltransferase superfamily.

The protein localises to the golgi apparatus membrane. The sequence is that of Probable methyltransferase PMT12 from Arabidopsis thaliana (Mouse-ear cress).